Consider the following 267-residue polypeptide: 14-3-3-like protein GF14 chi (267 aa).

An N-acetylalanine modification is found at Ala2. Phosphoserine occurs at positions 72 and 195. Residue Thr216 is modified to Phosphothreonine. The residue at position 267 (Ser267) is a Phosphoserine.

This sequence belongs to the 14-3-3 family. Interacts with TPK1. Interacts with the isocitrate dehydrogenase IDH3, and malate dehydrogenases MDH1 and MDH2. Interacts with DREB1A and DREB1B in the nucleus. Interacts with CINV1.

It is found in the nucleus. The protein resides in the cytoplasm. Its function is as follows. Is associated with a DNA binding complex that binds to the G box, a well-characterized cis-acting DNA regulatory element found in plant genes. Involved in the regulation of nutrient metabolism. The protein is 14-3-3-like protein GF14 chi (GRF1) of Arabidopsis thaliana (Mouse-ear cress).